A 1217-amino-acid polypeptide reads, in one-letter code: Inactive disease resistance protein RPS4 (1217 aa).

One can recognise a TIR domain in the interval 14–175 (PQHQVFINFR…EIVKAVKTAL (162 aa)). Glu88 is a catalytic residue. The NB-ARC domain maps to 211–472 (EQRLKDLEEK…FRSQDKDYVE (262 aa)). 11 LRR repeats span residues 260–285 (HALI…LLGE), 436–459 (PNIV…AFLD), 614–636 (LKEV…DFNP), 637–659 (INLV…DKDT), 682–706 (AEKL…MKKM), 708–728 (MLAF…EMNL), 729–749 (ISLK…PLIS), 750–774 (DNIE…KLQR), 796–818 (LKAL…EIDI), 819–842 (SFLN…SVQY), and 861–887 (LSQL…NLQC). Residues 1162-1195 (TEGVDGRVKKKKKTRMDNGRPKKKQRSGRDDNQT) are disordered. The short motif at 1170–1177 (KKKKKTRM) is the Nuclear localization signal element.

As to quaternary structure, interacts with EDS1.

Its subcellular location is the nucleus. The enzyme catalyses NAD(+) + H2O = ADP-D-ribose + nicotinamide + H(+). In Arabidopsis thaliana (Mouse-ear cress), this protein is Inactive disease resistance protein RPS4 (RPS4).